We begin with the raw amino-acid sequence, 209 residues long: MQISDYPQLNLSSVPRIASVHRITGETNVQVTVNLDGTGICKAATGIPFLDHMLHQISSHGLIDLDVQAKGDWEIDDHHTNEDVGITLGQALAKALGDRKGIVRFGNFLAPLDEALVQVALDFSGRPHLSYGLQIPTERVGTYDTQLVREFFVALVNHSQMTLHIRQLDGINSHHIIEATFKAFARAARMAIEVDPRRAGTIPSSKGVL.

It belongs to the imidazoleglycerol-phosphate dehydratase family.

The protein localises to the cytoplasm. It catalyses the reaction D-erythro-1-(imidazol-4-yl)glycerol 3-phosphate = 3-(imidazol-4-yl)-2-oxopropyl phosphate + H2O. It functions in the pathway amino-acid biosynthesis; L-histidine biosynthesis; L-histidine from 5-phospho-alpha-D-ribose 1-diphosphate: step 6/9. The chain is Imidazoleglycerol-phosphate dehydratase from Nostoc sp. (strain PCC 7120 / SAG 25.82 / UTEX 2576).